The primary structure comprises 86 residues: UPF0367 protein PMN2A_1492 (86 aa).

Belongs to the UPF0367 family.

In Prochlorococcus marinus (strain NATL2A), this protein is UPF0367 protein PMN2A_1492.